Consider the following 420-residue polypeptide: O-methyltransferase opaF (420 aa).

Residues 262 to 263 (GG), D287, and 308 to 309 (DL) each bind S-adenosyl-L-methionine. The Proton acceptor role is filled by H328.

Belongs to the class I-like SAM-binding methyltransferase superfamily. Cation-independent O-methyltransferase family.

The protein operates within secondary metabolite biosynthesis. O-methyltransferase; part of the gene cluster that mediates the biosynthesis of oxepinamides, derivatives of anthranilyl-containing tripeptides that share an oxepin ring and a fused pyrimidinone moiety. The nonribosomal peptide synthetase (NRPS) opaA assembles the quinazolinone core with D-Phe incorporation. The first adenylation domain (A1) of opaA loads and activates anthranilic acid whereas the second A domain (A2) is for activating of L-Phe, which is then converted to D-form by the E domain. The third A domain (A3) is responsible for L-Ile activation and the terminal condensation domain C3 for cyclization and releasing the NRPS product protuboxepin K. The cytochrome P450 monooxygenase opaB then catalyzes alone the oxepin ring formation to convert protuboxepin K into protuboxepin A. The flavoenzyme opaC installs subsequently one hydroxyl group at the oxepin ring, accompanied by double bond migration, to form 15-epi-oxepinamide E. The epimerase opaE changes the D-Phe residue back to L-form, leading to oxepinamide E, which is further methylated at the hydroxyl group at C-12 by the O-methyltransferase OpaF to yield oxepinamide F. This Aspergillus ustus protein is O-methyltransferase opaF.